A 362-amino-acid polypeptide reads, in one-letter code: Probable dual-specificity RNA methyltransferase RlmN (362 aa).

The active-site Proton acceptor is Glu-105. The 234-residue stretch at 111 to 344 folds into the Radical SAM core domain; that stretch reads HEYGNSICVT…VTIRREQGHD (234 aa). Cys-118 and Cys-349 form a disulfide bridge. Positions 125, 129, and 132 each coordinate [4Fe-4S] cluster. Residues 175-176, Ser-207, 230-232, and Asn-306 contribute to the S-adenosyl-L-methionine site; these read GE and SLH. The active-site S-methylcysteine intermediate is the Cys-349.

It belongs to the radical SAM superfamily. RlmN family. The cofactor is [4Fe-4S] cluster.

The protein resides in the cytoplasm. It carries out the reaction adenosine(2503) in 23S rRNA + 2 reduced [2Fe-2S]-[ferredoxin] + 2 S-adenosyl-L-methionine = 2-methyladenosine(2503) in 23S rRNA + 5'-deoxyadenosine + L-methionine + 2 oxidized [2Fe-2S]-[ferredoxin] + S-adenosyl-L-homocysteine. It catalyses the reaction adenosine(37) in tRNA + 2 reduced [2Fe-2S]-[ferredoxin] + 2 S-adenosyl-L-methionine = 2-methyladenosine(37) in tRNA + 5'-deoxyadenosine + L-methionine + 2 oxidized [2Fe-2S]-[ferredoxin] + S-adenosyl-L-homocysteine. Its function is as follows. Specifically methylates position 2 of adenine 2503 in 23S rRNA and position 2 of adenine 37 in tRNAs. The chain is Probable dual-specificity RNA methyltransferase RlmN from Bacillus anthracis (strain A0248).